A 184-amino-acid polypeptide reads, in one-letter code: Large ribosomal subunit protein eL13 (184 aa).

The interval 28 to 53 (PARKERRRQARKAKAQRIAPRPASGP) is disordered. A compositionally biased stretch (basic residues) spans 31-42 (KERRRQARKAKA).

It belongs to the eukaryotic ribosomal protein eL13 family.

The chain is Large ribosomal subunit protein eL13 (RPL13) from Schistosoma mansoni (Blood fluke).